A 628-amino-acid polypeptide reads, in one-letter code: Leucine-rich repeat and fibronectin type-III domain-containing protein 3 (628 aa).

The first 16 residues, 1–16 (MAVLPLLLCLLPLAPA), serve as a signal peptide directing secretion. Topologically, residues 17–540 (SSPSQPATPS…APHAPFLGGT (524 aa)) are extracellular. In terms of domain architecture, LRRNT spans 19–59 (PSQPATPSPCPRRCRCQTQSLPLSVLCPGAGLLFVPPSLDR). LRR repeat units lie at residues 84–105 (GLLH…AFAD), 108–129 (ALRA…QLRG), 132–153 (NLRH…ALDD), 157–178 (TLED…ALGR), 181–202 (NVNT…AFSR), and 205–226 (KLAR…PLFS). The LRRCT domain occupies 249–295 (NPLHCNCELVWLRRLAREDDLEACASPPALGGRYFWAVGEEEFVCEP). The region spanning 295-382 (PPVVTHRSPP…GEATAAVELT (88 aa)) is the Ig-like domain. Cys317 and Cys366 form a disulfide bridge. N-linked (GlcNAc...) asparagine glycans are attached at residues Asn348 and Asn393. The interval 380 to 432 (ELTVGPPPPPQLANSTSCDPPRDGDPDALTPPSAASASAAAKAADTGPPTDRG) is disordered. Over residues 406-429 (DALTPPSAASASAAAKAADTGPPT) the composition is skewed to low complexity. In terms of domain architecture, Fibronectin type-III spans 427-525 (PPTDRGVQVT…GCARFSTEPA (99 aa)). Residues 541–561 (MIIALGGVIVASVLVFIFVLL) form a helical membrane-spanning segment. Residues 562–628 (MRYKVHGGQP…WRPSHEPTGP (67 aa)) are Cytoplasmic-facing. Residues 587 to 628 (QTNGSLGPTPAPPAPEPAAPRAHTVVQLDCEPWRPSHEPTGP) are disordered. The span at 595-604 (TPAPPAPEPA) shows a compositional bias: pro residues. Residues 617–628 (EPWRPSHEPTGP) are compositionally biased toward basic and acidic residues.

The protein belongs to the LRFN family. Can form heteromeric complexes with LRFN1, LRFN2, LRFN4 and LRFN5. Able to form homomeric complexes across cell junctions, between adjacent cells. Does not interact with DLG4. N-glycosylated.

It is found in the cell membrane. The protein resides in the cell projection. It localises to the axon. Its subcellular location is the dendrite. The protein localises to the synapse. It is found in the presynaptic cell membrane. The protein resides in the postsynaptic cell membrane. Functionally, cell adhesion molecule that mediates homophilic cell-cell adhesion in a Ca(2+)-independent manner. Promotes neurite outgrowth in hippocampal neurons. The sequence is that of Leucine-rich repeat and fibronectin type-III domain-containing protein 3 (LRFN3) from Ailuropoda melanoleuca (Giant panda).